A 179-amino-acid chain; its full sequence is Bifunctional protein PyrR (179 aa).

Residues 100-112 carry the PRPP-binding motif; that stretch reads VILVDDVLFTGRT.

It belongs to the purine/pyrimidine phosphoribosyltransferase family. PyrR subfamily. In terms of assembly, homodimer and homohexamer; in equilibrium.

It carries out the reaction UMP + diphosphate = 5-phospho-alpha-D-ribose 1-diphosphate + uracil. Functionally, regulates transcriptional attenuation of the pyrimidine nucleotide (pyr) operon by binding in a uridine-dependent manner to specific sites on pyr mRNA. This disrupts an antiterminator hairpin in the RNA and favors formation of a downstream transcription terminator, leading to a reduced expression of downstream genes. Its function is as follows. Also displays a weak uracil phosphoribosyltransferase activity which is not physiologically significant. This chain is Bifunctional protein PyrR, found in Geobacillus sp. (strain WCH70).